The following is a 688-amino-acid chain: DNA ligase (688 aa).

NAD(+) is bound by residues 38–42 (DEEYD), 87–88 (SL), and Glu-118. Lys-120 acts as the N6-AMP-lysine intermediate in catalysis. Residues Arg-141, Glu-175, Lys-291, and Lys-315 each coordinate NAD(+). Residues Cys-409, Cys-412, Cys-428, and Cys-433 each contribute to the Zn(2+) site. The 90-residue stretch at 590-679 (VKLDILRGLT…AELKGYNFDE (90 aa)) folds into the BRCT domain.

The protein belongs to the NAD-dependent DNA ligase family. LigA subfamily. Mg(2+) is required as a cofactor. The cofactor is Mn(2+).

It catalyses the reaction NAD(+) + (deoxyribonucleotide)n-3'-hydroxyl + 5'-phospho-(deoxyribonucleotide)m = (deoxyribonucleotide)n+m + AMP + beta-nicotinamide D-nucleotide.. In terms of biological role, DNA ligase that catalyzes the formation of phosphodiester linkages between 5'-phosphoryl and 3'-hydroxyl groups in double-stranded DNA using NAD as a coenzyme and as the energy source for the reaction. It is essential for DNA replication and repair of damaged DNA. This is DNA ligase from Thermotoga maritima (strain ATCC 43589 / DSM 3109 / JCM 10099 / NBRC 100826 / MSB8).